A 76-amino-acid chain; its full sequence is Small ribosomal subunit protein eS17 (76 aa).

This sequence belongs to the eukaryotic ribosomal protein eS17 family.

The polypeptide is Small ribosomal subunit protein eS17 (Picrophilus torridus (strain ATCC 700027 / DSM 9790 / JCM 10055 / NBRC 100828 / KAW 2/3)).